A 140-amino-acid polypeptide reads, in one-letter code: ATP synthase epsilon chain (140 aa).

Belongs to the ATPase epsilon chain family. In terms of assembly, F-type ATPases have 2 components, CF(1) - the catalytic core - and CF(0) - the membrane proton channel. CF(1) has five subunits: alpha(3), beta(3), gamma(1), delta(1), epsilon(1). CF(0) has three main subunits: a, b and c.

It is found in the cell inner membrane. Its function is as follows. Produces ATP from ADP in the presence of a proton gradient across the membrane. This Bdellovibrio bacteriovorus (strain ATCC 15356 / DSM 50701 / NCIMB 9529 / HD100) protein is ATP synthase epsilon chain.